A 262-amino-acid polypeptide reads, in one-letter code: Octopine permease ATP-binding protein P (262 aa).

The ABC transporter domain maps to 9–254 (VQLKDIRKNF…PRTDRFRQFL (246 aa)). ATP is bound at residue 41 to 48 (GSSGSGKS).

This sequence belongs to the ABC transporter superfamily.

It is found in the cell inner membrane. Component of the octopine active transport system probably consisting of four subunits: Q, M, P and T. The chain is Octopine permease ATP-binding protein P (occP) from Rhizobium radiobacter (Agrobacterium tumefaciens).